The chain runs to 243 residues: Collagen triple helix repeat-containing protein 1 (243 aa).

Positions 1-30 are cleaved as a signal peptide; that stretch reads MRPQGPAASPQRLRGLLLLLLLQLPAPSSA. One can recognise a Collagen-like domain in the interval 57 to 90; it reads QGPAGVPGRDGSPGANGIPGTPGIPGRDGFKGEK. Residues 62-85 are disordered; that stretch reads VPGRDGSPGANGIPGTPGIPGRDG. Residue Asn186 is glycosylated (N-linked (GlcNAc...) asparagine).

Post-translationally, N-glycosylated. In terms of tissue distribution, isoform 1 is expressed in calcified atherosclerotic plaque and chondrocyte-like cells.

It is found in the secreted. The protein localises to the extracellular space. The protein resides in the extracellular matrix. May act as a negative regulator of collagen matrix deposition. This chain is Collagen triple helix repeat-containing protein 1 (CTHRC1), found in Homo sapiens (Human).